We begin with the raw amino-acid sequence, 61 residues long: Large ribosomal subunit protein eL37 (61 aa).

Residues C20, C23, C35, and C38 each coordinate Zn(2+). The segment at 20 to 38 (CPRCGRHSYNIVKGYCAAC) adopts a C4-type zinc-finger fold.

It belongs to the eukaryotic ribosomal protein eL37 family. Zn(2+) serves as cofactor.

Functionally, binds to the 23S rRNA. The polypeptide is Large ribosomal subunit protein eL37 (Caldivirga maquilingensis (strain ATCC 700844 / DSM 13496 / JCM 10307 / IC-167)).